Reading from the N-terminus, the 159-residue chain is Endoribonuclease YbeY (159 aa).

Residues His114, His118, and His124 each contribute to the Zn(2+) site.

This sequence belongs to the endoribonuclease YbeY family. It depends on Zn(2+) as a cofactor.

Its subcellular location is the cytoplasm. In terms of biological role, single strand-specific metallo-endoribonuclease involved in late-stage 70S ribosome quality control and in maturation of the 3' terminus of the 16S rRNA. The chain is Endoribonuclease YbeY from Pectobacterium carotovorum subsp. carotovorum (strain PC1).